Consider the following 384-residue polypeptide: Sensor protein VanS (384 aa).

2 consecutive transmembrane segments (helical) span residues 21–41 (MYIVAIVVVAIVFVLYIRSMI) and 76–96 (IDIFIYVAIVISILILCRVML). The 216-residue stretch at 161-376 (YLAHDIKTPL…TFRVELPAMP (216 aa)) folds into the Histidine kinase domain. Histidine 164 carries the phosphohistidine; by autocatalysis modification. An involved in low-affinity ATP-binding. Exhibits higher affinity for ATP than GTP region spans residues 221-384 (QTITLTKTHI…MPDLVDKRRS (164 aa)).

Post-translationally, autophosphorylated.

It localises to the membrane. The catalysed reaction is ATP + protein L-histidine = ADP + protein N-phospho-L-histidine.. With respect to regulation, phosphorylation of VanR inhibited by EDTA. Its function is as follows. Member of the two-component regulatory system VanS/VanR. Functions as a sensor protein kinase which is autophosphorylated at a histidine residue in response to environmental stimuli, such as glycopeptide antibiotics. VanS transfers its phosphate group to transcriptional regulatory protein VanR, thereby modulating expression of target genes. Binds directly to, and autophosphorylation activity is enhanced by, the glycopeptides vancomycin and teicoplanin, in vitro. However it has also been reported that autophosphorylation, phosphate transfer to VanR and dephosphorylation of phospho-VanR are all unaffected by the presence of vancomycin, in vitro. In the absence of vancomycin, negatively regulates VanR-mediated activation of vanS, vanH, vanA and vanX, probably as a result of dephosphorylating phospho-VanR. May inhibit promoter-specific DNA binding by VanR. Involved in conferring vancomycin resistance. The sequence is that of Sensor protein VanS from Enterococcus faecium (Streptococcus faecium).